A 703-amino-acid chain; its full sequence is Ion-translocating oxidoreductase complex subunit C (703 aa).

2 consecutive 4Fe-4S ferredoxin-type domains span residues 368-397 and 407-436; these read MAPQ…QQLY and KARN…VQYY. [4Fe-4S] cluster is bound by residues Cys377, Cys380, Cys383, Cys387, Cys416, Cys419, Cys422, and Cys426. Disordered regions lie at residues 505-558 and 653-674; these read AVPA…EDPR and AQQA…EEDP. Basic and acidic residues predominate over residues 524-539; that stretch reads AAREARKAQARERRAQ.

The protein belongs to the 4Fe4S bacterial-type ferredoxin family. RnfC subfamily. In terms of assembly, the complex is composed of six subunits: RnfA, RnfB, RnfC, RnfD, RnfE and RnfG. The cofactor is [4Fe-4S] cluster.

The protein localises to the cell inner membrane. Its function is as follows. Part of a membrane-bound complex that couples electron transfer with translocation of ions across the membrane. This chain is Ion-translocating oxidoreductase complex subunit C, found in Serratia proteamaculans (strain 568).